Consider the following 78-residue polypeptide: Large ribosomal subunit protein bL28 (78 aa).

Belongs to the bacterial ribosomal protein bL28 family.

This Pasteurella multocida (strain Pm70) protein is Large ribosomal subunit protein bL28.